The sequence spans 454 residues: Alkaline extracellular protease (454 aa).

An N-terminal signal peptide occupies residues 1 to 15; sequence MKLATAFTILTAVLA. Residues 16–157 constitute a propeptide that is removed on maturation; sequence APLAAPAPAP…EIPASSNAKR (142 aa). The Inhibitor I9 domain occupies 68 to 146; it reads FIVVFDSSAT…TVEPDTIVSL (79 aa). The N-linked (GlcNAc...) asparagine glycan is linked to Asn123. The Peptidase S8 domain occupies 166-454; that stretch reads QWGLSRISHK…NAVAYNGVGI (289 aa). Active-site charge relay system residues include Asp200, His231, and Ser397.

Belongs to the peptidase S8 family. Post-translationally, the pro-region is removed through cleavage by XPR6 after Lys156-Arg157, which yields mature active XPR2. In terms of processing, the 10 consecutive -X-Ala- or -X-Pro- dipeptides located over 100 amino acids upstream of the N-terminal of mature XPR2 are subject to dipeptidyl aminopeptidase (DPAPase)-processing. DPAPase activity is not necessary for XPR6 cleavage and for secretion of mature active XPR2. N-glycosylated. Glycosylation within the pro-region has no effect on secretion and maturation at 18 degrees Celsius, but is required for secretion at 28 degrees Celsius.

It is found in the secreted. It carries out the reaction Hydrolysis of proteins with broad specificity for peptide bonds, and a preference for a large uncharged residue in P1. Hydrolyzes peptide amides.. Its activity is regulated as follows. The protease activity is completely inhibited by the serine inhibitor PMSF but is not affected by thiol group inhibitors and in the presence of dithiothreitol. In the presence of high concentrations of o-phenanthroline the protease activity is only partially inhibited. The pro-region plays an inhibitory role and may provide a mechanism for preventing premature activation in the secretory pathway. Its function is as follows. Major secreted protein that belongs to the subtilisin family serine proteases. In Yarrowia lipolytica (strain CLIB 122 / E 150) (Yeast), this protein is Alkaline extracellular protease.